A 438-amino-acid polypeptide reads, in one-letter code: MYALGDWRRTHYSSEVNSEMDGQEIIIMGWNHSIRKLGKLVFIILRDREGTIQIVAPKQKVSEETFATAKSLGKEDVMAIKGKVVANEKAPAGFEVIPIEIKILNKADTPLPLDPSEKVSADIDTRLDKRFLDLRRPKIQSLFKLRSEVLKSIRNTFHDNGFIDVDTPKLVASATEGGTELFPISYFDKEAFLGQSPQLYKQMMMAAGFDRVFEIGPIFRAEEHNTRRHLNEAISIDCEMSFADEKDAMEILEKVINNAFTDIYNNNQKELQTLGIDLKVQETPFPRIEYTEAVDMVNAKGVEMEWGEDFSRPAEAALGEMMDGFYFITDWPTEIRPFYTLPNEDNPKLCKAFDLMYKDLEISSGAQRNHKYDLLVEGIKRMGLNPEGFGTYLEAFKYGMPPHSGWGVGIERLMMIMACQQNIRECVLFPRDRQRLTP.

Glu-176 serves as a coordination point for L-aspartate. The interval 198 to 201 is aspartate; the sequence is QLYK. L-aspartate is bound at residue Arg-220. ATP-binding positions include 220–222, 228–230, and Glu-361; these read RAE and RHL. Mg(2+) is bound by residues Glu-361 and Ser-364. The L-aspartate site is built by Ser-364 and Arg-368. 409 to 412 is an ATP binding site; sequence GIER.

It belongs to the class-II aminoacyl-tRNA synthetase family. Type 2 subfamily. In terms of assembly, homodimer. It depends on Mg(2+) as a cofactor.

The protein resides in the cytoplasm. It catalyses the reaction tRNA(Asx) + L-aspartate + ATP = L-aspartyl-tRNA(Asx) + AMP + diphosphate. In terms of biological role, aspartyl-tRNA synthetase with relaxed tRNA specificity since it is able to aspartylate not only its cognate tRNA(Asp) but also tRNA(Asn). Reaction proceeds in two steps: L-aspartate is first activated by ATP to form Asp-AMP and then transferred to the acceptor end of tRNA(Asp/Asn). This chain is Aspartate--tRNA(Asp/Asn) ligase, found in Methanococcus aeolicus (strain ATCC BAA-1280 / DSM 17508 / OCM 812 / Nankai-3).